Consider the following 177-residue polypeptide: ALIVVGSIVDIAITEVNNAEENSRISITFFRLFRVMRLVKLLSRGEGIRTLLWTFIKSFQALPYVALLIVMLFFIYAVIGMQVFGKIALNDTTEINRNNNFQTFPQAVLLLFRCATGEAWQEIMLACLPDKKCDPDSEPANSTEADHSCGSSFAVFYFISFYMLCAFLIIDLFVAVI.

A helical membrane pass occupies residues 27–45 (ITFFRLFRVMRLVKLLSRG). A helical transmembrane segment spans residues 64-84 (YVALLIVMLFFIYAVIGMQVF). N-linked (GlcNAc...) asparagine glycosylation is present at asparagine 90. Positions 107–125 (AVLLLFRCATGEAWQEIML) form an intramembrane region, pore-forming. The short motif at 116-119 (TGEA) is the Selectivity filter of repeat IV element. Cysteine 133 and cysteine 149 are disulfide-bonded. N-linked (GlcNAc...) asparagine glycosylation is present at asparagine 141. Residues 154 to 177 (AVFYFISFYMLCAFLIIDLFVAVI) form a helical membrane-spanning segment.

The protein belongs to the calcium channel alpha-1 subunit (TC 1.A.1.11) family. CACNA1C subfamily. As to quaternary structure, component of a calcium channel complex consisting of a pore-forming alpha subunit (CACNA1C) and ancillary beta, gamma and delta subunits. The channel complex contains alpha, beta, gamma and delta subunits in a 1:1:1:1 ratio, i.e. it contains only one of each type of subunit. CACNA1C channel activity is modulated by ancillary subunits, such as CACNB2, CACNB3, CACNA2D1 and CACNA2D4. Phosphorylation by PKA activates the channel.

The protein localises to the cell membrane. The protein resides in the perikaryon. It localises to the postsynaptic density membrane. It is found in the cell projection. Its subcellular location is the dendrite. The protein localises to the sarcolemma. The protein resides in the T-tubule. It carries out the reaction Ca(2+)(in) = Ca(2+)(out). Its activity is regulated as follows. Inhibited by dihydropyridines (DHP), such as isradipine. Channel activity is regulated by Ca(2+) and calmodulin. Its function is as follows. Pore-forming, alpha-1C subunit of the voltage-gated calcium channel that gives rise to L-type calcium currents. Mediates influx of calcium ions into the cytoplasm, and thereby triggers calcium release from the sarcoplasm. Plays an important role in excitation-contraction coupling in the heart. Required for normal heart development and normal regulation of heart rhythm. Required for normal contraction of smooth muscle cells in blood vessels and in the intestine. Essential for normal blood pressure regulation via its role in the contraction of arterial smooth muscle cells. Long-lasting (L-type) calcium channels belong to the 'high-voltage activated' (HVA) group. This is Voltage-dependent L-type calcium channel subunit alpha-1C (CACNA1C) from Gallus gallus (Chicken).